We begin with the raw amino-acid sequence, 320 residues long: Cytochrome f (320 aa).

An N-terminal signal peptide occupies residues 1-35 (MKLNSLINLIQKSIYSCTLLLIILNIICVAPNSSN). The heme site is built by Phe37, Cys57, Cys60, and His61. A helical transmembrane segment spans residues 286-306 (IKGMIVFFFASVLAQIFFVLK).

The protein belongs to the cytochrome f family. In terms of assembly, the 4 large subunits of the cytochrome b6-f complex are cytochrome b6, subunit IV (17 kDa polypeptide, petD), cytochrome f and the Rieske protein, while the 4 small subunits are PetG, PetL, PetM and PetN. The complex functions as a dimer. Heme serves as cofactor.

Its subcellular location is the plastid. It localises to the chloroplast thylakoid membrane. Its function is as follows. Component of the cytochrome b6-f complex, which mediates electron transfer between photosystem II (PSII) and photosystem I (PSI), cyclic electron flow around PSI, and state transitions. This Pyropia yezoensis (Susabi-nori) protein is Cytochrome f.